The primary structure comprises 156 residues: Small ribosomal subunit protein uS7 (156 aa).

The protein belongs to the universal ribosomal protein uS7 family. Part of the 30S ribosomal subunit. Contacts proteins S9 and S11.

One of the primary rRNA binding proteins, it binds directly to 16S rRNA where it nucleates assembly of the head domain of the 30S subunit. Is located at the subunit interface close to the decoding center, probably blocks exit of the E-site tRNA. In Clostridium botulinum (strain Alaska E43 / Type E3), this protein is Small ribosomal subunit protein uS7.